The sequence spans 469 residues: 3-phosphoshikimate 1-carboxyvinyltransferase (469 aa).

A disordered region spans residues lysine 21–lysine 45. 3-phosphoshikimate is bound by residues lysine 52, serine 53, and arginine 57. Phosphoenolpyruvate is bound at residue lysine 52. Residues glycine 125 and arginine 153 each contribute to the phosphoenolpyruvate site. 3-phosphoshikimate contacts are provided by serine 199, glutamine 201, aspartate 352, and lysine 379. Phosphoenolpyruvate is bound at residue glutamine 201. Residue aspartate 352 is the Proton acceptor of the active site. Residues arginine 383 and arginine 426 each coordinate phosphoenolpyruvate.

It belongs to the EPSP synthase family. Monomer.

It is found in the cytoplasm. The enzyme catalyses 3-phosphoshikimate + phosphoenolpyruvate = 5-O-(1-carboxyvinyl)-3-phosphoshikimate + phosphate. It functions in the pathway metabolic intermediate biosynthesis; chorismate biosynthesis; chorismate from D-erythrose 4-phosphate and phosphoenolpyruvate: step 6/7. Its function is as follows. Catalyzes the transfer of the enolpyruvyl moiety of phosphoenolpyruvate (PEP) to the 5-hydroxyl of shikimate-3-phosphate (S3P) to produce enolpyruvyl shikimate-3-phosphate and inorganic phosphate. The polypeptide is 3-phosphoshikimate 1-carboxyvinyltransferase (Bradyrhizobium diazoefficiens (strain JCM 10833 / BCRC 13528 / IAM 13628 / NBRC 14792 / USDA 110)).